A 61-amino-acid chain; its full sequence is Metallothionein-2E (61 aa).

Position 1 is an N-acetylmethionine (Met1). Residues 1 to 29 form a beta region; it reads MDPNCSCATRDSCACASSCKCKECKCTSC. Residues Cys5, Cys7, Cys13, Cys15, Cys19, Cys21, Cys24, Cys26, Cys29, Cys33, Cys34, Cys36, Cys37, Cys41, Cys44, Cys48, Cys50, Cys57, Cys59, and Cys60 each contribute to the a divalent metal cation site. The alpha stretch occupies residues 30–61; the sequence is KKSCCSCCPAGCTKCAQGCICKGALDKCSCCA.

It belongs to the metallothionein superfamily. Type 1 family. As to quaternary structure, monomer.

In terms of biological role, metallothioneins have a high content of cysteine residues that bind various heavy metals; these proteins are transcriptionally regulated by both heavy metals and glucocorticoids. The protein is Metallothionein-2E of Oryctolagus cuniculus (Rabbit).